We begin with the raw amino-acid sequence, 356 residues long: Ornithine cyclodeaminase (356 aa).

Positions 53 and 77 each coordinate L-ornithine. NAD(+) is bound by residues Thr92, Arg120, 147–148 (AQ), Asp169, Thr209, 232–235 (VGGD), Lys239, and Ser300. Arg120 lines the L-ornithine pocket. Asp235 provides a ligand contact to L-ornithine. Catalysis depends on Asp235, which acts as the Proton donor/acceptor. Val301 contributes to the L-ornithine binding site.

Belongs to the ornithine cyclodeaminase/mu-crystallin family. Requires NAD(+) as cofactor.

It carries out the reaction L-ornithine = L-proline + NH4(+). The protein operates within amino-acid biosynthesis; L-proline biosynthesis; L-proline from L-ornithine: step 1/1. With respect to regulation, is inhibited by L-proline and L-lysine. Is not activated by small concentrations of L-arginine, and is even inhibited by about 50% at 0.5 mM L-arginine. Its function is as follows. Catalyzes the conversion of L-ornithine into L-proline with release of ammonia. Is involved in the utilization of octopine, a catabolic pathway that proceeds through L-arginine and L-ornithine to L-proline. Octopine is a predominant opine in plant cells transformed with Ti plasmid pTiAch5. The sequence is that of Ornithine cyclodeaminase from Agrobacterium tumefaciens (strain Ach5).